We begin with the raw amino-acid sequence, 140 residues long: Putative pre-16S rRNA nuclease (140 aa).

This sequence belongs to the YqgF nuclease family.

It is found in the cytoplasm. Could be a nuclease involved in processing of the 5'-end of pre-16S rRNA. This Serratia proteamaculans (strain 568) protein is Putative pre-16S rRNA nuclease.